A 248-amino-acid chain; its full sequence is tRNA pseudouridine synthase A (248 aa).

D55 functions as the Nucleophile in the catalytic mechanism. Residue Y114 participates in substrate binding.

The protein belongs to the tRNA pseudouridine synthase TruA family. In terms of assembly, homodimer.

The catalysed reaction is uridine(38/39/40) in tRNA = pseudouridine(38/39/40) in tRNA. In terms of biological role, formation of pseudouridine at positions 38, 39 and 40 in the anticodon stem and loop of transfer RNAs. The polypeptide is tRNA pseudouridine synthase A (Rhodopseudomonas palustris (strain ATCC BAA-98 / CGA009)).